Here is a 512-residue protein sequence, read N- to C-terminus: tRNA-2-methylthio-N(6)-dimethylallyladenosine synthase (512 aa).

The MTTase N-terminal domain occupies 23 to 139; that stretch reads RTYQVRTYGC…LPTLLERARH (117 aa). [4Fe-4S] cluster is bound by residues Cys32, Cys68, Cys102, Cys176, Cys180, and Cys183. The Radical SAM core domain occupies 162–398; the sequence is RESAYAAWVS…IELQERISLE (237 aa). Residues 401–469 enclose the TRAM domain; that stretch reads REQVGRAVEL…PHHLIADAPI (69 aa). The tract at residues 477-512 is disordered; it reads AGDAHAAGQKPRTGVGLGMPRIGAPAPSATAEGCGC.

Belongs to the methylthiotransferase family. MiaB subfamily. As to quaternary structure, monomer. The cofactor is [4Fe-4S] cluster.

The protein resides in the cytoplasm. It catalyses the reaction N(6)-dimethylallyladenosine(37) in tRNA + (sulfur carrier)-SH + AH2 + 2 S-adenosyl-L-methionine = 2-methylsulfanyl-N(6)-dimethylallyladenosine(37) in tRNA + (sulfur carrier)-H + 5'-deoxyadenosine + L-methionine + A + S-adenosyl-L-homocysteine + 2 H(+). Its function is as follows. Catalyzes the methylthiolation of N6-(dimethylallyl)adenosine (i(6)A), leading to the formation of 2-methylthio-N6-(dimethylallyl)adenosine (ms(2)i(6)A) at position 37 in tRNAs that read codons beginning with uridine. This Mycolicibacterium smegmatis (strain ATCC 700084 / mc(2)155) (Mycobacterium smegmatis) protein is tRNA-2-methylthio-N(6)-dimethylallyladenosine synthase.